The primary structure comprises 180 residues: Large ribosomal subunit protein uL5 (180 aa).

It belongs to the universal ribosomal protein uL5 family. Part of the 50S ribosomal subunit; part of the 5S rRNA/L5/L18/L25 subcomplex. Contacts the 5S rRNA and the P site tRNA. Forms a bridge to the 30S subunit in the 70S ribosome.

Its function is as follows. This is one of the proteins that bind and probably mediate the attachment of the 5S RNA into the large ribosomal subunit, where it forms part of the central protuberance. In the 70S ribosome it contacts protein S13 of the 30S subunit (bridge B1b), connecting the 2 subunits; this bridge is implicated in subunit movement. Contacts the P site tRNA; the 5S rRNA and some of its associated proteins might help stabilize positioning of ribosome-bound tRNAs. The chain is Large ribosomal subunit protein uL5 from Ligilactobacillus salivarius (strain UCC118) (Lactobacillus salivarius).